A 115-amino-acid polypeptide reads, in one-letter code: Large ribosomal subunit protein bL19 (115 aa).

It belongs to the bacterial ribosomal protein bL19 family.

Its function is as follows. This protein is located at the 30S-50S ribosomal subunit interface and may play a role in the structure and function of the aminoacyl-tRNA binding site. The sequence is that of Large ribosomal subunit protein bL19 from Clostridium tetani (strain Massachusetts / E88).